Here is a 693-residue protein sequence, read N- to C-terminus: Polyribonucleotide nucleotidyltransferase (693 aa).

Aspartate 489 and aspartate 495 together coordinate Mg(2+). Residues proline 556 to isoleucine 615 form the KH domain. The 69-residue stretch at glycine 625–arginine 693 folds into the S1 motif domain.

The protein belongs to the polyribonucleotide nucleotidyltransferase family. Component of the RNA degradosome, which is a multiprotein complex involved in RNA processing and mRNA degradation. Mg(2+) serves as cofactor.

It localises to the cytoplasm. It carries out the reaction RNA(n+1) + phosphate = RNA(n) + a ribonucleoside 5'-diphosphate. Involved in mRNA degradation. Catalyzes the phosphorolysis of single-stranded polyribonucleotides processively in the 3'- to 5'-direction. The polypeptide is Polyribonucleotide nucleotidyltransferase (Francisella tularensis subsp. tularensis (strain FSC 198)).